A 677-amino-acid polypeptide reads, in one-letter code: Methionine--tRNA ligase (677 aa).

A 'HIGH' region motif is present at residues 15-25 (PYANGSIHLGH). Zn(2+) is bound by residues C146, C149, C159, and C162. The 'KMSKS' region signature appears at 333 to 337 (KMSKS). An ATP-binding site is contributed by K336. The region spanning 575–677 (DFAKIDLRVA…DGAKPGQQVK (103 aa)) is the tRNA-binding domain.

The protein belongs to the class-I aminoacyl-tRNA synthetase family. MetG type 1 subfamily. As to quaternary structure, homodimer. Zn(2+) is required as a cofactor.

The protein localises to the cytoplasm. The enzyme catalyses tRNA(Met) + L-methionine + ATP = L-methionyl-tRNA(Met) + AMP + diphosphate. Functionally, is required not only for elongation of protein synthesis but also for the initiation of all mRNA translation through initiator tRNA(fMet) aminoacylation. This is Methionine--tRNA ligase from Salmonella paratyphi C (strain RKS4594).